Consider the following 142-residue polypeptide: MVLTAGDKANVKTVWSKVGSHLEEYGSETLERLFIVYPSTKTYFPHFDLHHDSAQVRAHGRKVLSALGEAVNHIDDIPGALSKLSDLHAQTLRVDPVNFKLLNLCFVVVVGRHHPTILTPEVHVSLDKFLSAVATALTSKYR.

The region spanning 2–142 is the Globin domain; the sequence is VLTAGDKANV…VATALTSKYR (141 aa). Heme b contacts are provided by His-59 and His-88.

This sequence belongs to the globin family. As to quaternary structure, heterotetramer of two alpha-A chains and two beta chains. In terms of tissue distribution, red blood cells.

Involved in oxygen transport from the lung to the various peripheral tissues. This chain is Hemoglobin subunit alpha-A, found in Chelonoidis niger (Galapagos giant tortoise).